Reading from the N-terminus, the 102-residue chain is Thioredoxin (102 aa).

The region spanning 2-102 is the Thioredoxin domain; that stretch reads VTEIKSLKQL…KAKIVQLVSQ (101 aa). Cysteines 30 and 33 form a disulfide.

Belongs to the thioredoxin family.

Participates in various redox reactions through the reversible oxidation of its active center dithiol to a disulfide and catalyzes dithiol-disulfide exchange reactions. In Mycoplasma pneumoniae (strain ATCC 29342 / M129 / Subtype 1) (Mycoplasmoides pneumoniae), this protein is Thioredoxin (trxA).